We begin with the raw amino-acid sequence, 1255 residues long: Membrane-associated guanylate kinase, WW and PDZ domain-containing protein 1 (1255 aa).

The PDZ 1 domain occupies 17 to 105 (ECTVKRGPQG…AVTFKAVRQG (89 aa)). In terms of domain architecture, Guanylate kinase-like spans 96–287 (AVTFKAVRQG…APITDPSQKF (192 aa)). 103–110 (RQGGRLNK) serves as a coordination point for ATP. Disordered stretches follow at residues 208–227 (HSLQ…SYND) and 235–265 (HTEN…TLQE). Residues 300 to 333 (GPLPENWEMAYTENGEVYFIDHNAKTTSWLDPRC) form the WW 1 domain. A Phosphoserine modification is found at Ser-357. A WW 2 domain is found at 359–392 (LELPAGWEKIEDPVYGVYYVDHINRKTQYENPVL). Residues 395-462 (KRKRQLEQQQ…QGKPFFTRNP (68 aa)) form a disordered region. The segment covering 402 to 414 (QQQQQQQHQQQPQ) has biased composition (low complexity). Positions 434 to 444 (PVAPSHPPSNP) are enriched in pro residues. A PDZ 2 domain is found at 471 to 553 (HTKLRKSSRG…GASVDLELCR (83 aa)). The span at 585–601 (QETYDSPASHSSKTGKV) shows a compositional bias: polar residues. 2 disordered regions span residues 585–622 (QETY…SSHG) and 719–820 (QRGG…GERD). Residues 642–720 (TVHIVKGPMG…GSEVTLLVQR (79 aa)) enclose the PDZ 3 domain. Phosphoserine is present on residues Ser-729 and Ser-740. Low complexity predominate over residues 741 to 755 (QNSSQHSVSSLRSLH). Ser-799 carries the post-translational modification Phosphoserine. The 83-residue stretch at 840-922 (DIFLWRKETG…QGHVNLTVRR (83 aa)) folds into the PDZ 4 domain. The interval 932–984 (ENEVPSPASSHHSSNQPASLTEEKRTPQGSQNSLNTVSSGSGSTSGIGSGGGG) is disordered. Composition is skewed to polar residues over residues 938–950 (PASS…QPAS) and 958–967 (PQGSQNSLNT). Over residues 974-984 (STSGIGSGGGG) the composition is skewed to gly residues. In terms of domain architecture, PDZ 5 spans 997 to 1093 (DVEIRRGENE…TVTLRIIPGD (97 aa)). Ser-1070 is subject to Phosphoserine. Residues 1111–1129 (TTTHAPSQQGTQETRTTTK) show a composition bias toward polar residues. A disordered region spans residues 1111-1142 (TTTHAPSQQGTQETRTTTKPKPDSQFEFKGPQ). The PDZ 6 domain occupies 1151–1233 (TVELERGAKG…RVRLFLRRGD (83 aa)).

In terms of assembly, part of a complex composed of AMOTL2, MAGI1 and CDH5, within the complex AMOTL2 acts as a scaffold protein for the interaction of MAGI1 with CDH5. The complex is required for coupling actin fibers to cell junctions in endothelial cells. Interacts through its WW 2 domain with SYNPO and through its PDZ 5 domain with ACTN4. Interacts with cytoplasmic domain of ADGRB1. Interacts via its WW domains with DRPLA. Interacts with ESAM, LRP2 and CXADR. May interact with CTNNB1. Interacts through its PDZ 1 domain with NET1. Interacts with ASIC3 and AMOT. Interacts with FCHSD2. Interacts with IGSF5/JAM4 and through its PDZ 2 and 3 domains with NPHS1 forming a tripartite complex. Interacts with DDN. May interact (via PDZ domain) with RAPGEF2. Interacts with DLL1. Interacts with KCNJ10 and possibly with KCNJ10/KCNJ16 heterodimer; this interaction may facilitate KCNJ10/KCNJ16 potassium channel expression at the basolateral membrane in kidney tubular cells. Interacts with PRRG4 (via cytoplasmic domain).

It localises to the cell junction. It is found in the tight junction. The protein resides in the cytoplasm. Its subcellular location is the membrane. Plays a role in coupling actin fibers to cell junctions in endothelial cells, via its interaction with AMOTL2 and CDH5. May regulate acid-induced ASIC3 currents by modulating its expression at the cell surface. In Rattus norvegicus (Rat), this protein is Membrane-associated guanylate kinase, WW and PDZ domain-containing protein 1 (Magi1).